We begin with the raw amino-acid sequence, 282 residues long: uncharacterized protein (282 aa).

The next 6 helical transmembrane spans lie at 18–38, 40–60, 87–107, 119–139, 164–184, and 260–280; these read PIVLLIPVPGSSVIHDLWAGT, LLVVFGISVLLTFYPGWVTIG, LWIVLAIGFLTAALAGGTPVV, ALHFLRITALSVVLLALGAMV, IPVDEWAVALALALRAFPMLI, and VTLAITAMASGTAVAIESLIL.

The protein belongs to the CbiQ family.

It is found in the cell membrane. This is an uncharacterized protein from Mycobacterium tuberculosis (strain CDC 1551 / Oshkosh).